Here is a 511-residue protein sequence, read N- to C-terminus: Probable DNA ligase (511 aa).

An ATP-binding site is contributed by Glu-208. The active-site N6-AMP-lysine intermediate is the Lys-210. The ATP site is built by Arg-215, Arg-230, Glu-259, Phe-299, Arg-377, and Lys-383.

This sequence belongs to the ATP-dependent DNA ligase family. Mg(2+) serves as cofactor.

It catalyses the reaction ATP + (deoxyribonucleotide)n-3'-hydroxyl + 5'-phospho-(deoxyribonucleotide)m = (deoxyribonucleotide)n+m + AMP + diphosphate.. Functionally, DNA ligase that seals nicks in double-stranded DNA during DNA replication, DNA recombination and DNA repair. The sequence is that of Probable DNA ligase from Streptomyces griseus subsp. griseus (strain JCM 4626 / CBS 651.72 / NBRC 13350 / KCC S-0626 / ISP 5235).